The primary structure comprises 146 residues: ATP synthase epsilon chain (146 aa).

The tract at residues 102–122 (QSAKKRAEQHMQEAKEKHNER) is disordered.

This sequence belongs to the ATPase epsilon chain family. In terms of assembly, F-type ATPases have 2 components, CF(1) - the catalytic core - and CF(0) - the membrane proton channel. CF(1) has five subunits: alpha(3), beta(3), gamma(1), delta(1), epsilon(1). CF(0) has three main subunits: a, b and c.

It is found in the cell membrane. Its function is as follows. Produces ATP from ADP in the presence of a proton gradient across the membrane. This Lactobacillus gasseri (strain ATCC 33323 / DSM 20243 / BCRC 14619 / CIP 102991 / JCM 1131 / KCTC 3163 / NCIMB 11718 / NCTC 13722 / AM63) protein is ATP synthase epsilon chain.